A 428-amino-acid polypeptide reads, in one-letter code: CinA-like protein (428 aa).

This sequence belongs to the CinA family.

This is CinA-like protein from Mycobacterium leprae (strain TN).